We begin with the raw amino-acid sequence, 170 residues long: Guided entry of tail-anchored proteins factor 1 (170 aa).

At 1–6 (MAAGFN) the chain is on the lumenal side. A helical transmembrane segment spans residues 7–27 (WFLVLSSVFLCNLVKTFLPSI). The Cytoplasmic segment spans residues 28–96 (SSFLSKIFHK…KSRTAQQAKM (69 aa)). Residues 35–93 (FHKDADQEMEMRTEIQNMKMELSTISMMDEFARYARLERKINKMTDQLKTLVKSRTAQQ) form an interaction with GET3/TRC40 region. Residues 61–91 (MMDEFARYARLERKINKMTDQLKTLVKSRTA) adopt a coiled-coil conformation. The chain crosses the membrane as a helical span at residues 97 to 117 (KWIVNIAFYILQAALMISLIL). Topologically, residues 118–137 (KYYADPVTVVPSKWIAPLER) are lumenal. The helical transmembrane segment at 138 to 158 (LVAFPSGVAGGVGITCWLVVC) threads the bilayer. Residues 159 to 170 (NKVVALILQAVS) lie on the Cytoplasmic side of the membrane.

This sequence belongs to the WRB/GET1 family. Component of the Golgi to ER traffic (GET) complex, which is composed of GET1/WRB, CAMLG/GET2 and GET3/TRC40. Within the complex, GET1 and CAMLG form a heterotetramer which is stabilized by phosphatidylinositol binding and which binds to the GET3 homodimer.

The protein localises to the endoplasmic reticulum membrane. Its function is as follows. Required for the post-translational delivery of tail-anchored (TA) proteins to the endoplasmic reticulum (ER). Together with CAMLG/GET2, acts as a membrane receptor for soluble GET3/TRC40, which recognizes and selectively binds the transmembrane domain of TA proteins in the cytosol. Required to ensure correct topology and ER insertion of CAMLG. The sequence is that of Guided entry of tail-anchored proteins factor 1 from Danio rerio (Zebrafish).